We begin with the raw amino-acid sequence, 194 residues long: Dephospho-CoA kinase (194 aa).

The DPCK domain occupies 4 to 194; the sequence is VIGLTGSIGM…VKEILQKLGA (191 aa). 12 to 17 is a binding site for ATP; sequence GMGKTT.

It belongs to the CoaE family.

The protein resides in the cytoplasm. It catalyses the reaction 3'-dephospho-CoA + ATP = ADP + CoA + H(+). It functions in the pathway cofactor biosynthesis; coenzyme A biosynthesis; CoA from (R)-pantothenate: step 5/5. Its function is as follows. Catalyzes the phosphorylation of the 3'-hydroxyl group of dephosphocoenzyme A to form coenzyme A. The protein is Dephospho-CoA kinase of Agrobacterium fabrum (strain C58 / ATCC 33970) (Agrobacterium tumefaciens (strain C58)).